A 388-amino-acid polypeptide reads, in one-letter code: Succinate--CoA ligase [ADP-forming] subunit beta (388 aa).

The ATP-grasp domain occupies 9–244; the sequence is KELFARRGLP…VTQEDAREAH (236 aa). Residues K46, 53–55, E99, T102, and E107 contribute to the ATP site; that span reads GRG. The Mg(2+) site is built by N199 and D213. Residues N264 and 321-323 contribute to the substrate site; that span reads GIV.

It belongs to the succinate/malate CoA ligase beta subunit family. Heterotetramer of two alpha and two beta subunits. Mg(2+) is required as a cofactor.

The catalysed reaction is succinate + ATP + CoA = succinyl-CoA + ADP + phosphate. It catalyses the reaction GTP + succinate + CoA = succinyl-CoA + GDP + phosphate. The protein operates within carbohydrate metabolism; tricarboxylic acid cycle; succinate from succinyl-CoA (ligase route): step 1/1. Its function is as follows. Succinyl-CoA synthetase functions in the citric acid cycle (TCA), coupling the hydrolysis of succinyl-CoA to the synthesis of either ATP or GTP and thus represents the only step of substrate-level phosphorylation in the TCA. The beta subunit provides nucleotide specificity of the enzyme and binds the substrate succinate, while the binding sites for coenzyme A and phosphate are found in the alpha subunit. The protein is Succinate--CoA ligase [ADP-forming] subunit beta of Hamiltonella defensa subsp. Acyrthosiphon pisum (strain 5AT).